The sequence spans 113 residues: uncharacterized protein (113 aa).

This is an uncharacterized protein from Saccharomyces cerevisiae (strain ATCC 204508 / S288c) (Baker's yeast).